Here is a 1010-residue protein sequence, read N- to C-terminus: MSMEPRKKRNSILKVRQAVETIEETVMNSGPSSTTTNRRVSFHNVKHVKQYDRDHGKILDATPVKEKITDTIGSDGILTPRGGNMDISESPACTSSFQVFGGGNLDKTMDMSLETTINENNETARLFETTRDPTLLYEKIVETTTKVTERIVSMPLDDTLAMFNTTNQEDKDMSVDRSVLFTIPKVPKHNATMNRTIPMDLDESKAAGGQCDETMNVFNFTNLEAAEMDTSKLDENNTMNAIRIPINSNVMPVDMDITEHHTLIEEKKNDTFGPSQLMDISAPQVQVNDTLAIFNSPRDICNKGLGVPQNLINIASNVVPVDMDITDQAVLNAEKKNDQFETSQLMDISIPKVLVNDTMAMFNSPKHVSKSSMDLEKTIEAADKSTKYPSIADEVEDLDMDMDITEQQPCEAGNQQNDGLQLQKEDLMDISVIRDSPAVNDTMAVFQSPARVKIGANNSIIDSQKSIVFGDEMSIDETQNDGTLTLPKSNVEVTTTNDVYTSLERQEENASENVSMINESSVHSEIDKKSFMLIEEERAFMHSSMIDVAQKLEDDGSSKTPVILASQSASLATKEPSALHNSSATLNNSMELDNNTLLKTMQITTCEDISMVHESIAVELNSNKEQEQFGDETLQKNDTSNTGANFTFQGHNETSQIMNNVDSEAVNTSKISTYSAFNLSINQSISKRRRSLLNSARESPRRVALENSIMSMNGQTMEALTEYRQNKTMQTSQDSMPSMSLNDSGRDILAMNTSVRSPHLNSSKTAAPGTPSLMSQNVQLPPPSPQFEMPDFDPAVVNVVYLTSEDPSTEQHPEALKFQRIVENEKMKVQHEIDSLNSTNQLSAEKIDMLKTKELLKFSHDEREAIMIARKDAEIKFLELRLKFALEKKIESDQEIAELEQGNSKMAEQLRGLDKMAVVQKELEKLRSLPPSREESGKIRKEWMEMKQWEFDQKMKALRNVRSNMIALRSEKNALEMKVAEEHEKFAQRNDLKKSRMLVFSKAVKKIVNF.

Tandem repeats lie at residues 85–88, 109–112, 228–231, 255–258, 278–281, 323–326, 346–349, 402–405, and 428–431. The segment at 85 to 431 is 9 X 4 AA repeats of M-[D/E]-[I/L/M]-[S/T]; the sequence is MDISESPACT…LQKEDLMDIS (347 aa). Coiled-coil stretches lie at residues 820–915 and 956–988; these read RIVE…GLDK and KALRNVRSNMIALRSEKNALEMKVAEEHEKFAQ.

In terms of assembly, component of the KNL1 complex composed of knl-1 and kbp-5. Part of the ten-subunit outer kinetochore KMN network that includes the KNL1, MIS12 and NDC80 complexes. Interacts with the protein phosphatase 1 (PP1) catalytic subunit gsp-1; the interaction is direct. Interacts with the protein phosphatase 1 (PP1) catalytic subunit gsp-2; the interaction is direct. Interacts with the MIS12 complex subunits kbp-1, kbp-2 and mis-12. Interacts with the NDC80 complex components ndc-80 and him-10. Interacts with knl-3. Interacts with kbp-3. Interacts with kbp-4. Interacts with kbp-5.

Its subcellular location is the cytoplasm. It is found in the cell cortex. The protein resides in the chromosome. The protein localises to the centromere. It localises to the kinetochore. Its function is as follows. Acts as a component of the outer kinetochore KNL1 complex that serves as a docking point for spindle assembly checkpoint components and mediates microtubule-kinetochore interactions. Kinetochores, consisting of a centromere-associated inner segment and a microtubule-contacting outer segment, play a crucial role in chromosome segregation by mediating the physical connection between centromeric DNA and spindle microtubules. The outer kinetochore is made up of the ten-subunit KMN network, comprising the MIS12, NDC80 and KNL1 complexes, and auxiliary microtubule-associated components; together they connect the outer kinetochore with the inner kinetochore, bind microtubules, and mediate interactions with mitotic checkpoint proteins that delay anaphase until chromosomes are bioriented on the spindle. Binds the protein phosphatase 1 catalytic subunits gsp-1 and gsp-2, which has a role in delaying formation of load-bearing kinetochore-microtubule attachments. Required for the recruitment of spindle-assembly checkpoint components bub-1 and mdf-1/2 to unattached kinetochores. Binds microtubules which plays a role in silencing of the spindle assembly checkpoint, but not the formation of load-bearing microtubule-kinetochore attachments. Has a role in the correct localization of the spindly-like protein spdl-1 and the RZZ complex that is composed of rod-1, czw-1 and zwl-1 to kinetochores. In Caenorhabditis elegans, this protein is Outer kinetochore KNL1 complex subunit knl-1 (knl-1).